The sequence spans 441 residues: UDP-N-acetylmuramoylalanine--D-glutamate ligase (441 aa).

Residue 113-119 (GSNAKST) participates in ATP binding.

It belongs to the MurCDEF family.

The protein resides in the cytoplasm. The catalysed reaction is UDP-N-acetyl-alpha-D-muramoyl-L-alanine + D-glutamate + ATP = UDP-N-acetyl-alpha-D-muramoyl-L-alanyl-D-glutamate + ADP + phosphate + H(+). It functions in the pathway cell wall biogenesis; peptidoglycan biosynthesis. Cell wall formation. Catalyzes the addition of glutamate to the nucleotide precursor UDP-N-acetylmuramoyl-L-alanine (UMA). The polypeptide is UDP-N-acetylmuramoylalanine--D-glutamate ligase (Alcanivorax borkumensis (strain ATCC 700651 / DSM 11573 / NCIMB 13689 / SK2)).